A 257-amino-acid chain; its full sequence is Receptor expression-enhancing protein 4 (257 aa).

The next 2 membrane-spanning stretches (helical) occupy residues 1 to 21 (MVSW…CPAY) and 42 to 62 (WIVF…ISWF). A phosphoserine mark is found at Ser152 and Ser194. The disordered stretch occupies residues 178–257 (PHQRPPIGYR…KKTVPSDMDS (80 aa)). Thr196 is modified (phosphothreonine). Ser202 bears the Phosphoserine mark. Thr250 carries the post-translational modification Phosphothreonine. The residue at position 253 (Ser253) is a Phosphoserine.

It belongs to the DP1 family.

The protein resides in the endoplasmic reticulum membrane. Functionally, microtubule-binding protein required to ensure proper cell division and nuclear envelope reassembly by sequestering the endoplasmic reticulum away from chromosomes during mitosis. Probably acts by clearing the endoplasmic reticulum membrane from metaphase chromosomes. The protein is Receptor expression-enhancing protein 4 (REEP4) of Pongo abelii (Sumatran orangutan).